The sequence spans 448 residues: Histidinol dehydrogenase (448 aa).

NAD(+) contacts are provided by tyrosine 136, glutamine 197, and asparagine 220. The substrate site is built by serine 243, glutamine 265, and histidine 268. 2 residues coordinate Zn(2+): glutamine 265 and histidine 268. Residues glutamate 333 and histidine 334 each act as proton acceptor in the active site. Substrate contacts are provided by histidine 334, aspartate 367, glutamate 421, and histidine 426. Aspartate 367 contacts Zn(2+). Histidine 426 is a binding site for Zn(2+).

It belongs to the histidinol dehydrogenase family. It depends on Zn(2+) as a cofactor.

It catalyses the reaction L-histidinol + 2 NAD(+) + H2O = L-histidine + 2 NADH + 3 H(+). The protein operates within amino-acid biosynthesis; L-histidine biosynthesis; L-histidine from 5-phospho-alpha-D-ribose 1-diphosphate: step 9/9. Catalyzes the sequential NAD-dependent oxidations of L-histidinol to L-histidinaldehyde and then to L-histidine. This is Histidinol dehydrogenase from Pseudomonas syringae pv. syringae (strain B728a).